We begin with the raw amino-acid sequence, 141 residues long: Hemoglobin D subunit alpha (141 aa).

Positions 1–141 constitute a Globin domain; that stretch reads MLTEDDKQLI…VSAVLAEKYR (141 aa). Residue H58 coordinates O2. H87 is a binding site for heme b.

It belongs to the globin family. Tetramer of two alpha chains and two beta chains. As to expression, red blood cells.

In terms of biological role, involved in oxygen transport from the lung to the various peripheral tissues. This Aldabrachelys gigantea (Aldabra giant tortoise) protein is Hemoglobin D subunit alpha.